The following is a 681-amino-acid chain: Sodium-dependent phosphate transporter 1 (681 aa).

The next 6 membrane-spanning stretches (helical) occupy residues 25 to 45 (NLWMLILGFIIAFVLAFSVGA), 66 to 86 (ACILASIFETVGSALLGAKVS), 106 to 126 (LMAGSVSAMFGSAVWQLVASF), 162 to 182 (IVMSWFVSPLLSGIMSGILFF), 201 to 221 (ALPIFYACTIGINLFSIMYTG), and 234 to 254 (GTILISVGCAVFCALIVWFFV). The interval 266–295 (VKSSPSESPLMEKKSNLKEDHEETKMAPGD) is disordered. Phosphoserine is present on residues Ser269 and Ser273. Over residues 275–295 (LMEKKSNLKEDHEETKMAPGD) the composition is skewed to basic and acidic residues. A helical transmembrane segment spans residues 514–534 (VSLLFQFLQILTACFGSFAHG). Residues 553–560 (KQEASTKA) are a. 3 consecutive transmembrane segments (helical) span residues 561 to 581 (ATPIWLLLYGGVGICMGLWVW), 602 to 622 (FSIELASALTVVIASNIGLPI), and 652 to 672 (IFMAWFVTVPISGVISAAIMA).

The protein belongs to the inorganic phosphate transporter (PiT) (TC 2.A.20) family. In terms of tissue distribution, ubiquitously expressed.

The protein localises to the cell membrane. It carries out the reaction 2 Na(+)(out) + phosphate(out) = 2 Na(+)(in) + phosphate(in). Functionally, sodium-phosphate symporter which preferentially transports the monovalent form of phosphate with a stoichiometry of two sodium ions per phosphate ion. May play a role in extracellular matrix and cartilage calcification as well as in vascular calcification. Essential for cell proliferation but this function is independent of its phosphate transporter activity. In terms of biological role, (Microbial infection) May function as a retroviral receptor but do not confer infection susceptibility to Gibbon Ape Leukemia Virus (GaLV), Simian sarcoma-associated virus (SSAV) and Feline leukemia virus subgroup B (FeLV-B). This chain is Sodium-dependent phosphate transporter 1 (Slc20a1), found in Mus musculus (Mouse).